A 356-amino-acid chain; its full sequence is S-adenosylmethionine:tRNA ribosyltransferase-isomerase (356 aa).

The protein belongs to the QueA family. In terms of assembly, monomer.

It is found in the cytoplasm. It carries out the reaction 7-aminomethyl-7-carbaguanosine(34) in tRNA + S-adenosyl-L-methionine = epoxyqueuosine(34) in tRNA + adenine + L-methionine + 2 H(+). It functions in the pathway tRNA modification; tRNA-queuosine biosynthesis. In terms of biological role, transfers and isomerizes the ribose moiety from AdoMet to the 7-aminomethyl group of 7-deazaguanine (preQ1-tRNA) to give epoxyqueuosine (oQ-tRNA). The polypeptide is S-adenosylmethionine:tRNA ribosyltransferase-isomerase (Escherichia coli O8 (strain IAI1)).